The chain runs to 229 residues: Enolase-phosphatase E1 (229 aa).

The protein belongs to the HAD-like hydrolase superfamily. MasA/MtnC family. As to quaternary structure, monomer. Mg(2+) serves as cofactor.

The catalysed reaction is 5-methylsulfanyl-2,3-dioxopentyl phosphate + H2O = 1,2-dihydroxy-5-(methylsulfanyl)pent-1-en-3-one + phosphate. It participates in amino-acid biosynthesis; L-methionine biosynthesis via salvage pathway; L-methionine from S-methyl-5-thio-alpha-D-ribose 1-phosphate: step 3/6. The protein operates within amino-acid biosynthesis; L-methionine biosynthesis via salvage pathway; L-methionine from S-methyl-5-thio-alpha-D-ribose 1-phosphate: step 4/6. Its function is as follows. Bifunctional enzyme that catalyzes the enolization of 2,3-diketo-5-methylthiopentyl-1-phosphate (DK-MTP-1-P) into the intermediate 2-hydroxy-3-keto-5-methylthiopentenyl-1-phosphate (HK-MTPenyl-1-P), which is then dephosphorylated to form the acireductone 1,2-dihydroxy-3-keto-5-methylthiopentene (DHK-MTPene). In Pectobacterium carotovorum subsp. carotovorum (strain PC1), this protein is Enolase-phosphatase E1.